Consider the following 168-residue polypeptide: Ribosome maturation factor RimP (168 aa).

The protein belongs to the RimP family.

It is found in the cytoplasm. Its function is as follows. Required for maturation of 30S ribosomal subunits. The chain is Ribosome maturation factor RimP from Rickettsia bellii (strain OSU 85-389).